Reading from the N-terminus, the 300-residue chain is Pantoate--beta-alanine ligase (300 aa).

43 to 50 (MGYLHSGH) serves as a coordination point for ATP. H50 serves as the catalytic Proton donor. Q74 provides a ligand contact to (R)-pantoate. Q74 provides a ligand contact to beta-alanine. Residue 162–165 (GQKD) participates in ATP binding. Q168 lines the (R)-pantoate pocket. Residues I191 and 199–202 (KSSR) contribute to the ATP site.

This sequence belongs to the pantothenate synthetase family. As to quaternary structure, homodimer.

Its subcellular location is the cytoplasm. It catalyses the reaction (R)-pantoate + beta-alanine + ATP = (R)-pantothenate + AMP + diphosphate + H(+). The protein operates within cofactor biosynthesis; (R)-pantothenate biosynthesis; (R)-pantothenate from (R)-pantoate and beta-alanine: step 1/1. Functionally, catalyzes the condensation of pantoate with beta-alanine in an ATP-dependent reaction via a pantoyl-adenylate intermediate. The sequence is that of Pantoate--beta-alanine ligase (panC) from Dictyostelium discoideum (Social amoeba).